Reading from the N-terminus, the 446-residue chain is C-type lectin domain family 18 member A (446 aa).

A signal peptide spans 1–26; that stretch reads MLHPETSPGRGHLLAVLLALLGTAWA. Residues 52–182 form the SCP domain; sequence LSLHNRLRSW…AAIEAFVCAY (131 aa). Residue Asn-144 is glycosylated (N-linked (GlcNAc...) asparagine). Positions 228-261 constitute an EGF-like domain; it reads PRNPCRMSCQNHGRLNISTCHCHCPPGYTGRYCQ. Cystine bridges form between Cys-236/Cys-249, Cys-251/Cys-260, Cys-327/Cys-432, and Cys-408/Cys-424. One can recognise a C-type lectin domain in the interval 306–433; the sequence is IDGDCFMVSS…CKTRNRYICQ (128 aa).

N-glycosylated. Dectected in all cell lines tested and in peripheral blood cells.

Its subcellular location is the secreted. The protein localises to the endoplasmic reticulum. It localises to the golgi apparatus. It is found in the endosome. In terms of biological role, binds polysaccharides in a Ca(2+)-independent manner with a preferentially binding to fucoidan, beta-glucans and galactans. This is C-type lectin domain family 18 member A (CLEC18A) from Homo sapiens (Human).